Here is a 490-residue protein sequence, read N- to C-terminus: Argininosuccinate lyase (490 aa).

Belongs to the lyase 1 family. Argininosuccinate lyase subfamily.

Its subcellular location is the cytoplasm. The catalysed reaction is 2-(N(omega)-L-arginino)succinate = fumarate + L-arginine. The protein operates within amino-acid biosynthesis; L-arginine biosynthesis; L-arginine from L-ornithine and carbamoyl phosphate: step 3/3. The polypeptide is Argininosuccinate lyase (Bifidobacterium longum (strain DJO10A)).